The following is a 260-amino-acid chain: Snake venom serine protease gussurobin (260 aa).

A signal peptide spans 1–18 (MVLIRVLANLLILQLSYA). A propeptide spanning residues 19 to 24 (QKSSEL) is cleaved from the precursor. The Peptidase S1 domain occupies 25–251 (IIGGDECNIN…YTEWIQSTIA (227 aa)). 6 disulfides stabilise this stretch: cysteine 31-cysteine 165, cysteine 52-cysteine 68, cysteine 100-cysteine 258, cysteine 144-cysteine 212, cysteine 176-cysteine 191, and cysteine 202-cysteine 227. Residues histidine 67 and aspartate 112 each act as charge relay system in the active site. N-linked (GlcNAc...) asparagine glycosylation is found at asparagine 123 and asparagine 124. The Charge relay system role is filled by serine 206.

This sequence belongs to the peptidase S1 family. Snake venom subfamily. In terms of assembly, monomer. In terms of tissue distribution, expressed by the venom gland.

It is found in the secreted. Its function is as follows. Snake venom serine protease that may act in the hemostasis system of the prey. The sequence is that of Snake venom serine protease gussurobin from Gloydius ussuriensis (Ussuri mamushi).